We begin with the raw amino-acid sequence, 92 residues long: Small ribosomal subunit protein uS19 (92 aa).

The protein belongs to the universal ribosomal protein uS19 family.

In terms of biological role, protein S19 forms a complex with S13 that binds strongly to the 16S ribosomal RNA. The chain is Small ribosomal subunit protein uS19 from Roseobacter denitrificans (strain ATCC 33942 / OCh 114) (Erythrobacter sp. (strain OCh 114)).